The chain runs to 369 residues: 4-hydroxyproline betaine 2-epimerase (369 aa).

2 residues coordinate substrate: Tyr56 and Gln162. Catalysis depends on Lys164, which acts as the Proton donor/acceptor. Positions 194, 219, and 242 each coordinate Mg(2+). The active-site Proton donor/acceptor is the Lys266. Ala295 is a substrate binding site.

This sequence belongs to the mandelate racemase/muconate lactonizing enzyme family. It depends on Mg(2+) as a cofactor.

It carries out the reaction trans-4-hydroxy-L-proline betaine = cis-4-hydroxy-D-proline betaine. The catalysed reaction is L-proline betaine = D-proline betaine. Its function is as follows. Catalyzes the 2-epimerization of trans-4-hydroxy-L-proline betaine (tHyp-B) to cis-4-hydroxy-D-proline betaine (cHyp-B). Is involved in a catabolic pathway that degrades tHyp-B to alpha-ketoglutarate. This pathway would permit the utilization of tHyp-B as a carbon and nitrogen source in the absence of osmotic stress, since tHyp-B functions as an osmolyte and is not catabolized when it is needed as osmoprotectant. Can also catalyze the racemization of L-proline betaine. The polypeptide is 4-hydroxyproline betaine 2-epimerase (hpbD) (Paracoccus denitrificans (strain Pd 1222)).